We begin with the raw amino-acid sequence, 100 residues long: Urease subunit gamma (100 aa).

The protein belongs to the urease gamma subunit family. Heterotrimer of UreA (gamma), UreB (beta) and UreC (alpha) subunits. Three heterotrimers associate to form the active enzyme.

It is found in the cytoplasm. It catalyses the reaction urea + 2 H2O + H(+) = hydrogencarbonate + 2 NH4(+). The protein operates within nitrogen metabolism; urea degradation; CO(2) and NH(3) from urea (urease route): step 1/1. The chain is Urease subunit gamma from Prochlorococcus marinus (strain MIT 9215).